Here is a 505-residue protein sequence, read N- to C-terminus: MVSIRPDEISSILKQQITDYDQSVSVSNVGTVLQIGDGIARIYGLDQVMAGELLEFEDGTEGIALNLEDDNVGAVLMGEALGVQEGSNVKSTGKIASVPVGEAMKGRVVNPLGQPIDGKGEIPTSDNRLIEEMAPGIIKRRSVHEPMQTGITSIDAMIPVGRGQRELIIGDRQTGKTAIAIDTIINQKGQDVVCVYVAIGQKSASVANVVEVLREKGALDYTVVVSAGASEAAALQYLAPYTGAAIAEHFMYQGKATLVIYDDLTKQAQAYRQMSLLLRRPPGREAYPGDVFYCHSRLLERAAKLSDDMGGGSMTALPIIETQAGDVSAYIPTNVISITDGQIFLSADLFNSGLRPAINVGISVSRVGGAAQTKAIKKIAGTLKLELAQFDELAAFSQFASDLDEATQQQLERGKRLRELLKQAQFSPLNLAEQVAVVYAGVKGLIDEVPVEDVTKFAAELREYLKLNKAEFIEEILKEKKLNEGLETTLTEVIKEVKSSMLATV.

170–177 contacts ATP; sequence GDRQTGKT.

Belongs to the ATPase alpha/beta chains family. In terms of assembly, F-type ATPases have 2 components, CF(1) - the catalytic core - and CF(0) - the membrane proton channel. CF(1) has five subunits: alpha(3), beta(3), gamma(1), delta(1), epsilon(1). CF(0) has four main subunits: a(1), b(1), b'(1) and c(9-12).

It localises to the cellular thylakoid membrane. It carries out the reaction ATP + H2O + 4 H(+)(in) = ADP + phosphate + 5 H(+)(out). In terms of biological role, produces ATP from ADP in the presence of a proton gradient across the membrane. The alpha chain is a regulatory subunit. The polypeptide is ATP synthase subunit alpha (Prochlorococcus marinus (strain MIT 9515)).